A 343-amino-acid chain; its full sequence is Diterpene cyclase DtcycB (343 aa).

Positions 219, 223, and 227 each coordinate Mg(2+).

Belongs to the terpene synthase family. As to quaternary structure, homodimer. Mg(2+) is required as a cofactor.

It catalyses the reaction (2E,6E,10E)-geranylgeranyl diphosphate + H2O = (R)-nephthenol + diphosphate. It carries out the reaction (2E,6E,10E)-geranylgeranyl diphosphate = (R)-cembrene A + diphosphate. The enzyme catalyses (2E,6E,10E)-geranylgeranyl diphosphate + H2O = (1S,4E,8E,12E)-2,2,5,9,13-pentamethylcyclopentadeca-4,8,12-trien-1-ol + diphosphate. In terms of biological role, diterpene cyclases that can form multiple diterpene products. The protein is Diterpene cyclase DtcycB of Streptomyces sp.